The sequence spans 135 residues: Nucleoside diphosphate kinase (135 aa).

The ATP site is built by Lys-10, Phe-58, Arg-86, Thr-92, Arg-103, and Asn-113. His-116 (pros-phosphohistidine intermediate) is an active-site residue.

Belongs to the NDK family. In terms of assembly, homotetramer. Mg(2+) serves as cofactor.

Its subcellular location is the cytoplasm. The catalysed reaction is a 2'-deoxyribonucleoside 5'-diphosphate + ATP = a 2'-deoxyribonucleoside 5'-triphosphate + ADP. The enzyme catalyses a ribonucleoside 5'-diphosphate + ATP = a ribonucleoside 5'-triphosphate + ADP. Major role in the synthesis of nucleoside triphosphates other than ATP. The ATP gamma phosphate is transferred to the NDP beta phosphate via a ping-pong mechanism, using a phosphorylated active-site intermediate. In Nocardioides sp. (strain ATCC BAA-499 / JS614), this protein is Nucleoside diphosphate kinase.